The primary structure comprises 426 residues: Glutamyl-tRNA reductase (426 aa).

Residues 49–52 (TCNR), S107, 112–114 (EPQ), and Q118 contribute to the substrate site. Residue C50 is the Nucleophile of the active site. Residue 187-192 (GAGETI) participates in NADP(+) binding.

The protein belongs to the glutamyl-tRNA reductase family. Homodimer.

The enzyme catalyses (S)-4-amino-5-oxopentanoate + tRNA(Glu) + NADP(+) = L-glutamyl-tRNA(Glu) + NADPH + H(+). Its pathway is porphyrin-containing compound metabolism; protoporphyrin-IX biosynthesis; 5-aminolevulinate from L-glutamyl-tRNA(Glu): step 1/2. Functionally, catalyzes the NADPH-dependent reduction of glutamyl-tRNA(Glu) to glutamate 1-semialdehyde (GSA). The chain is Glutamyl-tRNA reductase from Ectopseudomonas mendocina (strain ymp) (Pseudomonas mendocina).